The chain runs to 84 residues: Limulin (84 aa).

The Pentraxin (PTX) domain occupies 6 to 84 (ITSKVKFPPS…DEQGDFLFNV (79 aa)). Ca(2+)-binding residues include Asp67 and Asn68.

The protein belongs to the pentraxin family. As to quaternary structure, homopentamer. Pentraxin (or pentaxin) have a discoid arrangement of 5 non-covalently bound subunits. Ca(2+) serves as cofactor. In terms of processing, a disulfide bond links Cys-38 to a Cys in the C-terminal half of the chain of 163 residues.

Its function is as follows. Lectin that binds sialic acid. Displays antiviral activity and therefore may contribute to defense against infections. This Limulus polyphemus (Atlantic horseshoe crab) protein is Limulin.